Consider the following 275-residue polypeptide: Dihydropteroate synthase (275 aa).

The Pterin-binding domain maps to Pro15–Lys267. Asn22 lines the Mg(2+) pocket. Residues Thr62, Asp96, Asn115, Asp185, Lys221, and Arg255–His257 contribute to the (7,8-dihydropterin-6-yl)methyl diphosphate site.

Belongs to the DHPS family. Homodimer. Requires Mg(2+) as cofactor.

The catalysed reaction is (7,8-dihydropterin-6-yl)methyl diphosphate + 4-aminobenzoate = 7,8-dihydropteroate + diphosphate. Its pathway is cofactor biosynthesis; tetrahydrofolate biosynthesis; 7,8-dihydrofolate from 2-amino-4-hydroxy-6-hydroxymethyl-7,8-dihydropteridine diphosphate and 4-aminobenzoate: step 1/2. Catalyzes the condensation of para-aminobenzoate (pABA) with 6-hydroxymethyl-7,8-dihydropterin diphosphate (DHPt-PP) to form 7,8-dihydropteroate (H2Pte), the immediate precursor of folate derivatives. This is Dihydropteroate synthase (folP-A) from Haemophilus influenzae (strain ATCC 51907 / DSM 11121 / KW20 / Rd).